A 455-amino-acid chain; its full sequence is Ornithine decarboxylase (455 aa).

An N6-(pyridoxal phosphate)lysine modification is found at K67. Residues S197, G234, and 271–274 (EPGR) contribute to the pyridoxal 5'-phosphate site. S297 is modified (phosphoserine; by CK2). 325–326 (YD) contacts substrate. Residue C354 is the Proton donor; shared with dimeric partner of the active site. S-nitrosocysteine is present on C354. D355 lines the substrate pocket. A pyridoxal 5'-phosphate-binding site is contributed by Y383.

Belongs to the Orn/Lys/Arg decarboxylase class-II family. In terms of assembly, homodimer. Only the dimer is catalytically active, as the active sites are constructed of residues from both monomers. Requires pyridoxal 5'-phosphate as cofactor.

It carries out the reaction L-ornithine + H(+) = putrescine + CO2. It functions in the pathway amine and polyamine biosynthesis; putrescine biosynthesis via L-ornithine pathway; putrescine from L-ornithine: step 1/1. Its activity is regulated as follows. Inhibited by antizymes (AZs) OAZ1, OAZ2 and OAZ3 in response to polyamine levels. AZs inhibit the assembly of the functional homodimer by binding to ODC monomers. Additionally, OAZ1 targets ODC monomers for ubiquitin-independent proteolytic destruction by the 26S proteasome. Catalyzes the first and rate-limiting step of polyamine biosynthesis that converts ornithine into putrescine, which is the precursor for the polyamines, spermidine and spermine. Polyamines are essential for cell proliferation and are implicated in cellular processes, ranging from DNA replication to apoptosis. The polypeptide is Ornithine decarboxylase (ODC1) (Cricetulus griseus (Chinese hamster)).